Consider the following 2376-residue polypeptide: Reducing polyketide synthase DEP5 (2376 aa).

The Ketosynthase family 3 (KS3) domain occupies 47–477; it reads LEPIAVVGMG…GTNAHTIIES (431 aa). Catalysis depends on for beta-ketoacyl synthase activity residues Cys221, His358, and His399. The segment at 593–906 is malonyl-CoA:ACP transacylase (MAT) domain; the sequence is VFTGQGAQWA…QYLPTLVRGF (314 aa). Residue Ser685 is the For malonyltransferase activity of the active site. The N-terminal hotdog fold stretch occupies residues 983–1121; sequence HDVLGQLTTG…GSIAIRTSAR (139 aa). Residues 983–1158 form a dehydratase (DH) domain region; that stretch reads HDVLGQLTTG…FNYGPTFQDM (176 aa). Residues 983 to 1286 enclose the PKS/mFAS DH domain; that stretch reads HDVLGQLTTG…CIAYEAAIPQ (304 aa). His1015 functions as the Proton acceptor; for dehydratase activity in the catalytic mechanism. The interval 1131-1286 is C-terminal hotdog fold; sequence LPQRASGRLW…CIAYEAAIPQ (156 aa). Catalysis depends on Asp1195, which acts as the Proton donor; for dehydratase activity. Residues 1659–1964 are enoyl reductase (ER) domain; the sequence is GRIQAGKVVF…DSICDNKIVI (306 aa). Positions 1988-2163 are ketoreductase (KR) domain; it reads ATYLLVGCLG…KPACAVVLPM (176 aa). One can recognise a Carrier domain in the interval 2289–2368; it reads DLVRDHFIAK…KFSELVCGAQ (80 aa). An O-(pantetheine 4'-phosphoryl)serine modification is found at Ser2327.

It participates in polyketide biosynthesis. In terms of biological role, reducing polyketide synthase; part of the gene cluster that mediates the biosynthesis of depudecin, a highly oxidized eleven-carbon linear polyketide that acts as a histone deacetylase (HDAC) inhibitor and makes a small contribution to pathogenesis. The reducing polyketide synthase DEP5 is the central enzyme in depudecin biosynthesis by yielding the backbone polyketide chain. The monooxygenases DEP2 and DEP4, as well as the uncharacterized protein DEP1, then act as tailoring enzymes to modify the intermediate polyketide chain into depudecin. The polypeptide is Reducing polyketide synthase DEP5 (Alternaria brassicicola (Dark leaf spot agent)).